A 764-amino-acid polypeptide reads, in one-letter code: Protein Lines homolog 1 (764 aa).

Disordered regions lie at residues 615-668 (SQSQ…TSLC) and 682-702 (WEEQ…SSPF). Over residues 645 to 654 (DSSEASEEET) the composition is skewed to acidic residues. S650 carries the phosphoserine modification. Polar residues predominate over residues 658 to 668 (HLANSKQTSLC). Low complexity predominate over residues 691 to 702 (EPLLSAESSSPF).

This sequence belongs to the protein lines family.

The sequence is that of Protein Lines homolog 1 from Mus musculus (Mouse).